A 332-amino-acid chain; its full sequence is Biotin synthase (332 aa).

In terms of domain architecture, Radical SAM core spans 53 to 282; it reads HFGKKVKLNM…TKEIRISGGR (230 aa). [4Fe-4S] cluster-binding residues include cysteine 71, cysteine 75, and cysteine 78. Positions 115, 147, 207, and 277 each coordinate [2Fe-2S] cluster.

Belongs to the radical SAM superfamily. Biotin synthase family. In terms of assembly, homodimer. It depends on [4Fe-4S] cluster as a cofactor. The cofactor is [2Fe-2S] cluster.

The catalysed reaction is (4R,5S)-dethiobiotin + (sulfur carrier)-SH + 2 reduced [2Fe-2S]-[ferredoxin] + 2 S-adenosyl-L-methionine = (sulfur carrier)-H + biotin + 2 5'-deoxyadenosine + 2 L-methionine + 2 oxidized [2Fe-2S]-[ferredoxin]. Its pathway is cofactor biosynthesis; biotin biosynthesis; biotin from 7,8-diaminononanoate: step 2/2. In terms of biological role, catalyzes the conversion of dethiobiotin (DTB) to biotin by the insertion of a sulfur atom into dethiobiotin via a radical-based mechanism. The protein is Biotin synthase of Bacillus cereus (strain AH187).